The sequence spans 404 residues: Biflaviolin synthase CYP158A2 (404 aa).

Positions 288 and 293 each coordinate flaviolin. Cys353 is a binding site for heme.

It belongs to the cytochrome P450 family. It depends on heme as a cofactor.

It carries out the reaction 2 flaviolin + 2 reduced [2Fe-2S]-[ferredoxin] + O2 + H(+) = 3,3'-biflaviolin + 2 oxidized [2Fe-2S]-[ferredoxin] + 2 H2O. It catalyses the reaction 2 flaviolin + 2 reduced [2Fe-2S]-[ferredoxin] + O2 + H(+) = 3,8'-biflaviolin + 2 oxidized [2Fe-2S]-[ferredoxin] + 2 H2O. The protein operates within pigment biosynthesis. Catalyzes oxidative C-C coupling reaction to polymerize flaviolin and form highly conjugated pigments which protect the soil bacterium from deleterious effects of UV irradiation (three isomers of biflaviolin and one triflaviolin). In Streptomyces coelicolor (strain ATCC BAA-471 / A3(2) / M145), this protein is Biflaviolin synthase CYP158A2.